The chain runs to 536 residues: MPEGKATSSASNTGKNKGGAYQDRDKPAQIRYSNISAAKAVADAVRTSLGPKGMDKMIQDEKGDVTITNDGATILKQMQVLHPSAKMLVELSKAQDIEAGDGTTSVVVIAGALLDSCNRLLQRGIHPTIISESFQKAVDKGVEVLTAMSQPVQLGDRETLLNSATTSLCSKVVSQYSSLLAPMSVDAVMRVIDPATATSVDLHDIKIIKKLGGTIDDCELVEGLVLTQRVANSSVSRVEKAKIGLIQFCLSPPKTDMDNQIVVSDYTQMDRVLREERAYILNMVKQIKKAGCNVLFIQKSILRDALSDLALHFLNKMKIMVVKDIEREDIEFICKTIGTKPIAHIDHFTPEMLGTAELAEEVSLDGSGKLVKITGCASPGKTVSIVVRGSNKLVIEEAERSIHDALCVIRCLVKKRALIAGGGAPEIELAVRLAEYSRTLGGMEAYCVRAYSDALEVIPSTLAENAGLNPISTVTELRNRHAQGDKMAGINVRKGGISNIMEELVVQPLLVSISALTLATETVRSILKIDDVVNAR.

Over residues 1-15 the composition is skewed to polar residues; that stretch reads MPEGKATSSASNTGK. The tract at residues 1-26 is disordered; that stretch reads MPEGKATSSASNTGKNKGGAYQDRDK. Position 50 (Gly-50) interacts with ADP. Residue Gly-50 participates in ATP binding. Asp-101 is a Mg(2+) binding site. Positions 102, 103, 104, 105, 170, 171, 422, and 507 each coordinate ADP. ATP contacts are provided by Gly-102 and Thr-103. Lys-171 contacts ATP.

The protein belongs to the TCP-1 chaperonin family. Component of the chaperonin-containing T-complex (TRiC), a hexadecamer composed of two identical back-to-back stacked rings enclosing a protein folding chamber. Each ring is made up of eight different subunits: TCP1/CCT1, CCT2, CCT3, CCT4, CCT5, CCT6A/CCT6, CCT7, CCT8.

The protein resides in the cytoplasm. The enzyme catalyses ATP + H2O = ADP + phosphate + H(+). In terms of biological role, component of the chaperonin-containing T-complex (TRiC), a molecular chaperone complex that assists the folding of actin, tubulin and other proteins upon ATP hydrolysis. The protein is T-complex protein 1 subunit delta (cct4) of Takifugu rubripes (Japanese pufferfish).